Consider the following 563-residue polypeptide: Cysteine--tRNA ligase, chloroplastic/mitochondrial (563 aa).

Position 91 (cysteine 91) interacts with Zn(2+). Glycine 92 lines the L-cysteine pocket. The short motif at 93-103 (VTAYDLSHIGH) is the 'HIGH' region element. Threonine 131 serves as a coordination point for L-cysteine. The 'KIIK' region motif lies at 136–139 (KIIA). Residues cysteine 271, histidine 296, and glutamate 300 each contribute to the Zn(2+) site. Histidine 296 contributes to the L-cysteine binding site. The short motif at 328-332 (KMSKS) is the 'KMSKS' region element. Lysine 331 lines the ATP pocket.

The protein belongs to the class-I aminoacyl-tRNA synthetase family. Zn(2+) serves as cofactor.

The protein localises to the plastid. Its subcellular location is the chloroplast. It localises to the mitochondrion. It catalyses the reaction tRNA(Cys) + L-cysteine + ATP = L-cysteinyl-tRNA(Cys) + AMP + diphosphate. Its function is as follows. Required for female gametophyte development. Is necessary for the fusion of central cell nuclei and programmed cell death (PCD) of the antipodals. This chain is Cysteine--tRNA ligase, chloroplastic/mitochondrial, found in Arabidopsis thaliana (Mouse-ear cress).